Here is a 301-residue protein sequence, read N- to C-terminus: Acetylglutamate kinase (301 aa).

Substrate is bound by residues 68–69 (GG), arginine 90, and asparagine 195.

Belongs to the acetylglutamate kinase family. ArgB subfamily.

It localises to the cytoplasm. The catalysed reaction is N-acetyl-L-glutamate + ATP = N-acetyl-L-glutamyl 5-phosphate + ADP. The protein operates within amino-acid biosynthesis; L-arginine biosynthesis; N(2)-acetyl-L-ornithine from L-glutamate: step 2/4. In terms of biological role, catalyzes the ATP-dependent phosphorylation of N-acetyl-L-glutamate. The protein is Acetylglutamate kinase of Pseudomonas fluorescens (strain SBW25).